Consider the following 2896-residue polypeptide: 3'-5' exoribonuclease HELZ2 (2896 aa).

2 C3H1-type zinc fingers span residues 90–114 (VCHY…RSRE) and 217–246 (GQPP…HSAV). The C2H2-type; atypical zinc finger occupies 287 to 311 (LYCPACLVTCHSQEAFENHCASSEH). The C3H1-type 3 zinc-finger motif lies at 327 to 357 (SPPPGLSKFELCPKPDLCEYGDACTKAHSAQ). The UvrD-like helicase ATP-binding domain maps to 770–1126 (VALIAGWGPG…VVLSTVHTCQ (357 aa)). 791–798 (GPFGTGKT) provides a ligand contact to ATP. The interaction with THRAP3 stretch occupies residues 810 to 1306 (RRPETKVLIC…ESTEAEDAEA (497 aa)). Residues 914–917 (DEAA) carry the DEAA box motif. Ser1253 carries the post-translational modification Phosphoserine. Short sequence motifs (LXXLL motif) lie at residues 1322 to 1326 (LRELL), 1365 to 1369 (LRKLL), and 1420 to 1424 (LVQLL). Residues 1581–1938 (REDCRAFLTF…VLQRQILLAL (358 aa)) form the RNB domain. The short motif at 2259 to 2263 (LEGLP) is the LXXLL motif 4 element. The segment at 2382–2896 (PSRFLERQTY…RVCRRPTMPS (515 aa)) is interaction with THRAP3. In terms of domain architecture, UvrD-like helicase ATP-binding 2 spans 2400–2675 (LNPSQNVAVR…HMLDTQYRMH (276 aa)). 2421–2428 (GPPGTGKT) contacts ATP. The short motif at 2476–2480 (LAGLL) is the LXXLL motif 5 element.

This sequence belongs to the DNA2/NAM7 helicase family. In terms of assembly, interacts with PPARA (via DNA-binding domain) and PPARG; the interaction stimulates the transcriptional activity of PPARA and PPARG. Interacts with THRAP3; the interaction is direct and HELZ2 and THRAP3 synergistically enhance the transcriptional activity of PPARG. It is probably part of the peroxisome proliferator activated receptor alpha interacting complex (PRIC). Expressed in various tissues including heart, pancreas, skeletal muscle, colon, spleen, liver, kidney, lung, peripheral blood and placenta.

It localises to the cytoplasm. It catalyses the reaction Exonucleolytic cleavage in the 3'- to 5'-direction to yield nucleoside 5'-phosphates.. The catalysed reaction is ATP + H2O = ADP + phosphate + H(+). Can degrade highly structured RNAs through its concerted ATP-dependent RNA helicase and 3' to 5' exoribonuclease activities. Shows a strong preference for pyrimidine over purine residues for its nuclease activity. Acts as a transcriptional coactivator for a number of nuclear receptors including PPARA, PPARG, THRA, THRB and RXRA. The chain is 3'-5' exoribonuclease HELZ2 from Homo sapiens (Human).